Reading from the N-terminus, the 284-residue chain is D-tagatose-1,6-bisphosphate aldolase subunit GatY (284 aa).

The active-site Proton donor is D82. H83 and H180 together coordinate Zn(2+). G181 provides a ligand contact to dihydroxyacetone phosphate. Residue H208 coordinates Zn(2+). Dihydroxyacetone phosphate is bound by residues 209–211 (GAS) and 230–233 (NVAT).

This sequence belongs to the class II fructose-bisphosphate aldolase family. TagBP aldolase GatY subfamily. As to quaternary structure, forms a complex with GatZ. Zn(2+) serves as cofactor.

It carries out the reaction D-tagatofuranose 1,6-bisphosphate = D-glyceraldehyde 3-phosphate + dihydroxyacetone phosphate. The protein operates within carbohydrate metabolism; D-tagatose 6-phosphate degradation; D-glyceraldehyde 3-phosphate and glycerone phosphate from D-tagatose 6-phosphate: step 2/2. Its function is as follows. Catalytic subunit of the tagatose-1,6-bisphosphate aldolase GatYZ, which catalyzes the reversible aldol condensation of dihydroxyacetone phosphate (DHAP or glycerone-phosphate) with glyceraldehyde 3-phosphate (G3P) to produce tagatose 1,6-bisphosphate (TBP). Requires GatZ subunit for full activity and stability. Is involved in the catabolism of galactitol. The protein is D-tagatose-1,6-bisphosphate aldolase subunit GatY of Escherichia coli O6:H1 (strain CFT073 / ATCC 700928 / UPEC).